A 353-amino-acid polypeptide reads, in one-letter code: Photosystem II D2 protein (353 aa).

An N-acetylthreonine modification is found at T2. At T2 the chain carries Phosphothreonine. Residues 41-61 (CAYFALGGWFTGTTFVTSWYT) traverse the membrane as a helical segment. Chlorophyll a is bound at residue H118. The chain crosses the membrane as a helical span at residues 125–141 (GFMLRQFEIARSVNLRP). 2 residues coordinate pheophytin a: Q130 and N143. The helical transmembrane segment at 153–166 (VFVSVFLIYPLGQS) threads the bilayer. Residue H198 participates in chlorophyll a binding. Residues 208–228 (AALLCAIHGATVENTLFEDGD) form a helical membrane-spanning segment. The a plastoquinone site is built by H215 and F262. H215 provides a ligand contact to Fe cation. H269 provides a ligand contact to Fe cation. The helical transmembrane segment at 279–295 (GLWMSAIGVVGLALNLR) threads the bilayer.

It belongs to the reaction center PufL/M/PsbA/D family. In terms of assembly, PSII is composed of 1 copy each of membrane proteins PsbA, PsbB, PsbC, PsbD, PsbE, PsbF, PsbH, PsbI, PsbJ, PsbK, PsbL, PsbM, PsbT, PsbX, PsbY, PsbZ, Psb30/Ycf12, at least 3 peripheral proteins of the oxygen-evolving complex and a large number of cofactors. It forms dimeric complexes. The D1/D2 heterodimer binds P680, chlorophylls that are the primary electron donor of PSII, and subsequent electron acceptors. It shares a non-heme iron and each subunit binds pheophytin, quinone, additional chlorophylls, carotenoids and lipids. There is also a Cl(-1) ion associated with D1 and D2, which is required for oxygen evolution. The PSII complex binds additional chlorophylls, carotenoids and specific lipids. is required as a cofactor.

Its subcellular location is the plastid. It is found in the chloroplast thylakoid membrane. It catalyses the reaction 2 a plastoquinone + 4 hnu + 2 H2O = 2 a plastoquinol + O2. Functionally, photosystem II (PSII) is a light-driven water:plastoquinone oxidoreductase that uses light energy to abstract electrons from H(2)O, generating O(2) and a proton gradient subsequently used for ATP formation. It consists of a core antenna complex that captures photons, and an electron transfer chain that converts photonic excitation into a charge separation. The D1/D2 (PsbA/PsbD) reaction center heterodimer binds P680, the primary electron donor of PSII as well as several subsequent electron acceptors. D2 is needed for assembly of a stable PSII complex. In Tetradesmus obliquus (Green alga), this protein is Photosystem II D2 protein.